A 504-amino-acid chain; its full sequence is Prenylcysteine oxidase 1 (504 aa).

The first 28 residues, 1–28 (MGRFAATLVGSLFGLGLLLCGLGRLASA), serve as a signal peptide directing secretion. Residues Asn196, Asn322, and Asn352 are each glycosylated (N-linked (GlcNAc...) asparagine).

This sequence belongs to the prenylcysteine oxidase family. Requires FAD as cofactor. In terms of tissue distribution, expressed mainly in cerebrum.

The protein resides in the lysosome. It carries out the reaction an S-polyprenyl-L-cysteine + O2 + H2O = a polyprenal + L-cysteine + H2O2. The catalysed reaction is S-(2E,6E)-farnesyl-L-cysteine + O2 + H2O = (2E,6E)-farnesal + L-cysteine + H2O2. The enzyme catalyses [(2E,6E,10E)-geranylgeranyl]-L-cysteine + O2 + H2O = (2E,6E,10E)-geranylgeranial + L-cysteine + H2O2. Prenylcysteine oxidase that cleaves the thioether bond of prenyl-L-cysteines, such as farnesylcysteine and geranylgeranylcysteine. Only active against free prenylcysteines and not prenylcysteine residues within prenylated proteins or peptides. Involved in the final step in the degradation of prenylated proteins, by degrading prenylcysteines after the protein has been degraded. The chain is Prenylcysteine oxidase 1 from Rattus norvegicus (Rat).